A 438-amino-acid chain; its full sequence is Plasmalemma vesicle-associated protein (438 aa).

Over 1-26 the chain is Cytoplasmic; sequence MGLSMDRSPYSRTGDRDRGCWYYLRY. Residues 27–47 form a helical; Signal-anchor for type II membrane protein membrane-spanning segment; it reads FFLFVSLIQFLIILGLVLFMI. Residues 48-438 lie on the Extracellular side of the membrane; the sequence is YGNVHATTES…LVNPAVPPSG (391 aa). Residues asparagine 82, asparagine 88, asparagine 112, and asparagine 150 are each glycosylated (N-linked (GlcNAc...) asparagine). The stretch at 289–383 forms a coiled coil; the sequence is AGIERVTREN…TEVDVRISAL (95 aa). The interval 393 to 438 is disordered; that stretch reads PAIQPRLPGPPPNPPPIDPASLEEFKKRILESQRPPLVNPAVPPSG. Composition is skewed to pro residues over residues 399 to 410 and 429 to 438; these read LPGPPPNPPPID and LVNPAVPPSG.

In terms of assembly, homodimer. In terms of tissue distribution, expressed in lung (alveolar endothelial and bronchial epithelial cells), kidney (endothelium of peritubular capillaries), spleen, liver, adrenal (endothelial cells of the zona reticularis of the cortex and chromaffin cells in the medulla), pancreas (islets of Langerhans), testis (germ cells, interstitial cells in neonatal testis and spermatids), ovary (stromal endothelial, thecal layer of developing follicles, luteal cells within the corpus luteum), intestine (endothelium of capillaries of the intestinal villi) and pituitary (pituicyte cells in the neural lobe) (at protein level). Expressed in lung, kidney, spleen, liver, adrenal, testis, heart, muscle, pituitary, thyroid and ovary.

The protein resides in the cell membrane. Its subcellular location is the membrane. It localises to the caveola. The protein localises to the cytoplasm. It is found in the perinuclear region. Functionally, endothelial cell-specific membrane protein involved in the formation of the diaphragms that bridge endothelial fenestrae. It is also required for the formation of stomata of caveolae and transendothelial channels. Functions in microvascular permeability, endothelial fenestrae contributing to the passage of water and solutes and regulating transcellular versus paracellular flow in different organs. Plays a specific role in embryonic development. This chain is Plasmalemma vesicle-associated protein (Plvap), found in Rattus norvegicus (Rat).